The sequence spans 217 residues: Salivary glue protein Sgs-3 (217 aa).

An N-terminal signal peptide occupies residues 1 to 23 (MKLTIATVLASILLIGFANVANC). Low complexity predominate over residues 45–130 (KSTSTTTTTT…KPTTHSTPKT (86 aa)). Positions 45-163 (KSTSTTTTTT…KHTTPTTTTT (119 aa)) are disordered. Basic residues predominate over residues 131–154 (KPTKHTTPKTKPTKHTTPKTKPTK).

The chain is Salivary glue protein Sgs-3 (Sgs3) from Drosophila simulans (Fruit fly).